Reading from the N-terminus, the 294-residue chain is Large ribosomal subunit protein uL2 (294 aa).

Disordered regions lie at residues 1–37 and 228–294; these read MGIRTFRPYTPSTRHMTVSNFEELSRDENGKRPRPEK and GSVM…RAAQ. Polar residues predominate over residues 10-22; the sequence is TPSTRHMTVSNFE. The segment covering 23–37 has biased composition (basic and acidic residues); it reads ELSRDENGKRPRPEK. A compositionally biased stretch (basic residues) spans 264–285; it reads KTRKRNKPSNKFIVRGRRRGGR.

It belongs to the universal ribosomal protein uL2 family. As to quaternary structure, part of the 50S ribosomal subunit. Forms a bridge to the 30S subunit in the 70S ribosome.

In terms of biological role, one of the primary rRNA binding proteins. Required for association of the 30S and 50S subunits to form the 70S ribosome, for tRNA binding and peptide bond formation. It has been suggested to have peptidyltransferase activity; this is somewhat controversial. Makes several contacts with the 16S rRNA in the 70S ribosome. This chain is Large ribosomal subunit protein uL2, found in Synechococcus sp. (strain JA-3-3Ab) (Cyanobacteria bacterium Yellowstone A-Prime).